A 140-amino-acid polypeptide reads, in one-letter code: Extracellular globin-1 (140 aa).

One can recognise a Globin domain in the interval 1–140 (ECDVLERFKV…YDFIASGIKP (140 aa)). Cys2 and Cys130 are joined by a disulfide. Position 93 (His93) interacts with heme b.

Belongs to the globin family. The giant hemoglobins of worms are formed of a monomeric subunit and a disulfide-bonded trimer. This subunit is monomeric.

The protein resides in the secreted. The polypeptide is Extracellular globin-1 (Metaphire hilgendorfi (Earthworm)).